The following is a 932-amino-acid chain: F-box protein COS111 (932 aa).

The disordered stretch occupies residues 29-63; sequence VSAKHRPSSTGVYGHDASTVDHASRSNNNLNLTRS. The span at 53-63 shows a compositional bias: low complexity; the sequence is RSNNNLNLTRS. An F-box domain is found at 146–193; sequence RKEISDLPDEVLRNILSNVKDDQRTLVNCLYVNKAFYNATKPTLYERP. The span at 346-358 shows a compositional bias: polar residues; it reads LSEGKSSDNGNNG. 4 disordered regions span residues 346-369, 389-450, 470-500, and 863-893; these read LSEGKSSDNGNNGKRQRSNSSVSS, TLSG…SNWF, ISSKKDEQQNEESAQTAQKIETPIIKRTEPF, and SVLPEDVPEDNNADDTNNGENTIAQPFSNDP. 2 stretches are compositionally biased toward low complexity: residues 395-431 and 438-447; these read NNSSKTQSKGKSSSSPGNPNDSSGEQDSIISSSSQID and TSSKSTSSTS. The segment covering 876–890 has biased composition (polar residues); that stretch reads DDTNNGENTIAQPFS.

F-box protein probably involved in ubiquitin conjugation pathway. This Candida glabrata (strain ATCC 2001 / BCRC 20586 / JCM 3761 / NBRC 0622 / NRRL Y-65 / CBS 138) (Yeast) protein is F-box protein COS111 (COS111).